Consider the following 255-residue polypeptide: tRNA pseudouridine synthase A (255 aa).

Asp-52 functions as the Nucleophile in the catalytic mechanism. Residue Tyr-111 coordinates substrate.

It belongs to the tRNA pseudouridine synthase TruA family. Homodimer.

It catalyses the reaction uridine(38/39/40) in tRNA = pseudouridine(38/39/40) in tRNA. Formation of pseudouridine at positions 38, 39 and 40 in the anticodon stem and loop of transfer RNAs. The chain is tRNA pseudouridine synthase A from Cereibacter sphaeroides (strain ATCC 17029 / ATH 2.4.9) (Rhodobacter sphaeroides).